Reading from the N-terminus, the 309-residue chain is tRNA pseudouridine synthase B (309 aa).

Asp-39 serves as the catalytic Nucleophile.

This sequence belongs to the pseudouridine synthase TruB family. Type 1 subfamily.

It carries out the reaction uridine(55) in tRNA = pseudouridine(55) in tRNA. Functionally, responsible for synthesis of pseudouridine from uracil-55 in the psi GC loop of transfer RNAs. The protein is tRNA pseudouridine synthase B of Bacillus velezensis (strain DSM 23117 / BGSC 10A6 / LMG 26770 / FZB42) (Bacillus amyloliquefaciens subsp. plantarum).